Consider the following 67-residue polypeptide: Large ribosomal subunit protein bL35 (67 aa).

Positions Gly22–His45 are disordered. Residues Asn35–His45 show a composition bias toward basic residues.

It belongs to the bacterial ribosomal protein bL35 family.

This is Large ribosomal subunit protein bL35 from Aquifex aeolicus (strain VF5).